Consider the following 356-residue polypeptide: MVDAGTLEKLEAGFQKLQAATDCKSLVKKYLTREVFDQLKTLKTSLGATLLDVIQSGVENLDSGVGIYAPDAESYTLFAPLFDPIIEDYHIGFTKNDSHPPSDFGDVNTLGDLDPDNKFVISTRVRCGRSLQGYPFNPCLTEAQYKEMEDKVSSTLNGLDGELKGTFYPLTGMAKEVQQQLIDDHFLFKEGDRFLQAANACRYWPTGRGIYHNDAKTFLVWCNEEDHLRIISMQKGGDLKAVYARLVNAVNEIEKRIPFSHHDRLGYLTFCPTNLGTTIRASVHIQLPKLAADRKRLEEVASKYNLQVRGTRGEHTEAEGGIYDISNKRRMGLTEYQAVKEMYDGIAELIKLEQSA.

Residues K9–I91 enclose the Phosphagen kinase N-terminal domain. Residue G64–Y68 participates in L-arginine binding. The Phosphagen kinase C-terminal domain occupies F119 to A356. ATP is bound by residues S122–R126 and H185. E225 is a binding site for L-arginine. Residue R229 coordinates ATP. C271 is a binding site for L-arginine. Residues R280–H284 and R309–E314 contribute to the ATP site. E314 lines the L-arginine pocket.

Belongs to the ATP:guanido phosphotransferase family.

The enzyme catalyses L-arginine + ATP = N(omega)-phospho-L-arginine + ADP + H(+). The polypeptide is Arginine kinase (ARGK) (Artemia franciscana (Brine shrimp)).